The sequence spans 147 residues: Putative toxin MJ0142 (147 aa).

Belongs to the UPF0332 family.

Putative toxin component of a putative type VII toxin-antitoxin (TA) system. Its cognate antitoxin might be MJ0141. The chain is Putative toxin MJ0142 from Methanocaldococcus jannaschii (strain ATCC 43067 / DSM 2661 / JAL-1 / JCM 10045 / NBRC 100440) (Methanococcus jannaschii).